A 188-amino-acid polypeptide reads, in one-letter code: Phosphatidylinositol N-acetylglucosaminyltransferase subunit H (188 aa).

This sequence belongs to the PIGH family. As to quaternary structure, component of the glycosylphosphatidylinositol-N-acetylglucosaminyltransferase (GPI-GnT) complex composed at least by PIGA, PIGC, PIGH, PIGP, PIGQ, PIGY and DPM2. Interacts with PIGQ.

The protein resides in the cytoplasm. It participates in glycolipid biosynthesis; glycosylphosphatidylinositol-anchor biosynthesis. In terms of biological role, part of the glycosylphosphatidylinositol-N-acetylglucosaminyltransferase (GPI-GnT) complex that catalyzes the transfer of N-acetylglucosamine from UDP-N-acetylglucosamine to phosphatidylinositol and participates in the first step of GPI biosynthesis. The chain is Phosphatidylinositol N-acetylglucosaminyltransferase subunit H from Homo sapiens (Human).